We begin with the raw amino-acid sequence, 336 residues long: MLRAGWLRGAAALALLLAARVVAAFEPITVGLAIGAASAITGYLSYNDIYCRFAECCREERPLNASALKLDLEEKLFGQHLATEVIFKALTGFRNNKNPKKPLTLSLHGWAGTGKNFVSQIVAENLHPKGLKSNFVHLFVSTLHFPHEQKIKLYQDQLQKWIRGNVSACANSVFIFDEMDKLHPGIIDAIKPFLDYYEQVDGVSYRKAIFIFLSNAGGDLITKTALDFWRAGRKREDIQLKDLEPVLSVGVFNNKHSGLWHSGLIDKNLIDYFIPFLPLEYRHVKMCVRAEMRARGSAIDEDIVTRVAEEMTFFPRDEKIYSDKGCKTVQSRLDFH.

The signal sequence occupies residues Met-1–Ala-24. Asn-64 is a glycosylation site (N-linked (GlcNAc...) asparagine). Gly-109 to Asn-116 contributes to the ATP binding site. An N-linked (GlcNAc...) asparagine glycan is attached at Asn-165.

This sequence belongs to the ClpA/ClpB family. Torsin subfamily. As to quaternary structure, homohexamer. Interacts with TOR1A; the interaction may be specific of neural tissues. Interacts with TOR1AIP1; TOR1AIP1 is required for TOR1B location on the nuclear membrane. Interacts (ATP-bound) with TOR1AIP2; important for endoplasmic reticulum integrity. In terms of processing, N-glycosylated. In terms of tissue distribution, widely expressed with low levels in brain.

It localises to the endoplasmic reticulum lumen. The protein resides in the nucleus membrane. It carries out the reaction ATP + H2O = ADP + phosphate + H(+). In terms of biological role, may serve as a molecular chaperone assisting in the proper folding of secreted and/or membrane proteins. Plays a role in non-neural cells nuclear envelope and endoplasmic reticulum integrity. May have a redundant function with TOR1A in non-neural tissues. The sequence is that of Torsin-1B (TOR1B) from Homo sapiens (Human).